We begin with the raw amino-acid sequence, 385 residues long: Calcium/calmodulin-dependent protein kinase type 1D (385 aa).

Residues 23–279 form the Protein kinase domain; sequence FEFKETLGTG…CEQAARHPWI (257 aa). ATP is bound by residues 29-37 and Lys-52; that span reads LGTGAFSEV. A Glycyl lysine isopeptide (Lys-Gly) (interchain with G-Cter in SUMO2) cross-link involves residue Lys-113. A Phosphoserine modification is found at Ser-122. Asp-144 acts as the Proton acceptor in catalysis. The residue at position 180 (Thr-180) is a Phosphothreonine; by CaMKK1 and CaMKK2. The segment at 279–319 is autoinhibitory domain; the sequence is IAGDTALNKNIHESVSAQIRKNFAKSKWRQAFNATAVVRHM. Positions 299–320 are calmodulin-binding; the sequence is KNFAKSKWRQAFNATAVVRHMR. Positions 318–324 match the Nuclear export signal motif; it reads HMRKLHL. A disordered region spans residues 360 to 385; that stretch reads SSGVSGVGAERRPRPTTVTAVHSGSK. The segment covering 375–385 has biased composition (polar residues); the sequence is TTVTAVHSGSK.

The protein belongs to the protein kinase superfamily. CAMK Ser/Thr protein kinase family. CaMK subfamily. In terms of tissue distribution, widely expressed. Highly and mostly expressed in polymorphonuclear leukocytes (neutrophilic and eosinophilic granulocytes) while little or no expression is observed in monocytes and lymphocytes.

Its subcellular location is the cytoplasm. The protein resides in the nucleus. The enzyme catalyses L-seryl-[protein] + ATP = O-phospho-L-seryl-[protein] + ADP + H(+). The catalysed reaction is L-threonyl-[protein] + ATP = O-phospho-L-threonyl-[protein] + ADP + H(+). With respect to regulation, activated by Ca(2+)/calmodulin. Binding of calmodulin results in conformational change that relieves intrasteric autoinhibition and allows phosphorylation of Thr-180 within the activation loop by CaMKK1 or CaMKK2. Phosphorylation of Thr-180 results in several fold increase in total activity. Unlike CaMK4, may be unable to exhibit autonomous activity after Ca(2+)/calmodulin activation. Its function is as follows. Calcium/calmodulin-dependent protein kinase that operates in the calcium-triggered CaMKK-CaMK1 signaling cascade and, upon calcium influx, activates CREB-dependent gene transcription, regulates calcium-mediated granulocyte function and respiratory burst and promotes basal dendritic growth of hippocampal neurons. In neutrophil cells, required for cytokine-induced proliferative responses and activation of the respiratory burst. Activates the transcription factor CREB1 in hippocampal neuron nuclei. May play a role in apoptosis of erythroleukemia cells. In vitro, phosphorylates transcription factor CREM isoform Beta. The chain is Calcium/calmodulin-dependent protein kinase type 1D (CAMK1D) from Homo sapiens (Human).